The sequence spans 135 residues: MPRNEKKTGQSASPRKLRVGELVRHAVAEILSQGGVHDPVLETHLITVPEVRMSPDLKLATVYVMPLGGKDEKPVLAALEQHKRFLRGEVARRVNLKYAPDLRFRIDERFAEAERIEKLLRTPAVQKDLSGEEET.

The protein belongs to the RbfA family. Monomer. Binds 30S ribosomal subunits, but not 50S ribosomal subunits or 70S ribosomes.

The protein resides in the cytoplasm. In terms of biological role, one of several proteins that assist in the late maturation steps of the functional core of the 30S ribosomal subunit. Associates with free 30S ribosomal subunits (but not with 30S subunits that are part of 70S ribosomes or polysomes). Required for efficient processing of 16S rRNA. May interact with the 5'-terminal helix region of 16S rRNA. The sequence is that of Ribosome-binding factor A from Rhodopseudomonas palustris (strain HaA2).